A 220-amino-acid chain; its full sequence is Probable GTP-binding protein EngB (220 aa).

The EngB-type G domain maps to 23 to 199 (SVREVAFAGR…ERVLASWLDI (177 aa)). Residues Ser38 and Thr60 each coordinate Mg(2+).

This sequence belongs to the TRAFAC class TrmE-Era-EngA-EngB-Septin-like GTPase superfamily. EngB GTPase family. Mg(2+) serves as cofactor.

In terms of biological role, necessary for normal cell division and for the maintenance of normal septation. This chain is Probable GTP-binding protein EngB, found in Dechloromonas aromatica (strain RCB).